We begin with the raw amino-acid sequence, 169 residues long: Major fimbrial subunit SMF-1 (169 aa).

A signal peptide spans 1 to 11 (MLAAAPLAANA).

It belongs to the fimbrial protein family.

It localises to the fimbrium. Involved in adherence to eukaryotic epithelial cells and abiotic surfaces. Mediates agglutination of animal red blood cells. The sequence is that of Major fimbrial subunit SMF-1 from Stenotrophomonas maltophilia (strain K279a).